A 485-amino-acid polypeptide reads, in one-letter code: NADH-quinone oxidoreductase subunit N (485 aa).

The next 14 membrane-spanning stretches (helical) occupy residues 10–30 (ILPE…GLFL), 40–60 (IFFQ…EYLI), 71–91 (VVFS…AVFV), 107–127 (GDFY…TAAH), 129–149 (LVTI…LIAI), 164–184 (FVLG…VYGM), 209–229 (FLLV…GAFP), 248–268 (IVAT…LFVG), 276–296 (WIYL…LVAL), 304–324 (LLGY…TLNP), 336–356 (VIVY…ISVG), 377–397 (AFIL…GGFI), 410–430 (GNYF…FYYV), and 454–474 (LIAL…PMLL).

The protein belongs to the complex I subunit 2 family. NDH-1 is composed of 14 different subunits. Subunits NuoA, H, J, K, L, M, N constitute the membrane sector of the complex.

Its subcellular location is the cell inner membrane. It carries out the reaction a quinone + NADH + 5 H(+)(in) = a quinol + NAD(+) + 4 H(+)(out). In terms of biological role, NDH-1 shuttles electrons from NADH, via FMN and iron-sulfur (Fe-S) centers, to quinones in the respiratory chain. The immediate electron acceptor for the enzyme in this species is believed to be ubiquinone. Couples the redox reaction to proton translocation (for every two electrons transferred, four hydrogen ions are translocated across the cytoplasmic membrane), and thus conserves the redox energy in a proton gradient. This Francisella tularensis subsp. holarctica (strain FTNF002-00 / FTA) protein is NADH-quinone oxidoreductase subunit N.